We begin with the raw amino-acid sequence, 762 residues long: MAIQTSNLGYPRIGLQREWKKTLEAFWSNKIDEEQFLTTMKEIRLQHVKVQQEKGIELIPIGDFTYYDHVLDTAYMLGFIPSRFSEFTSYLDVYFAMARGSKDHVASEMTKWFNTNYHYIVPEYEEGLQISLKDNRPLRLYEEAKQELGVDGKPVILGPYTFLKLAKGYTQEQFATILKQLVAPYVQLLSELHAAGAQVIQVDEPIFASLTKEEVQQAKEIYEAIRKEVPNANLLLQTYFDSVEENYEEIITFPVSGIGLDFVHGKEGNLHAISKYGFPADKTLAVGCIDGRNIWRADLDEVLTLFTTLQKQVQTKDFIVQPSCSLLHTPIDKTEETHLSTELFDALAFANQKLEELVLIHSALTKGTESISNELETYRNVHHTIRSSAVRNREDVKAARTALKEEDFSRPLPFEKRYELQQVALELPLLPTTTIGSFPQTTEVRQTRKEWRNGVISNEQYEKFIEKETEKWIRYQEEIGLDVLVHGEFERTDMVEYFGERLAGFSFTKNGWVQSYGSRCVKPPVIYGDVAFINGMTIKETVYAQSLTEKVVKGMLTGPVTILNWSFVRNDIPRKEVSYQIALALRHEIELLESSGIRVIQVDEPALREGMPLKEKDWDAYITWAVQSFLLATSSVANETQIHTHMCYSNFEDIVDAIRALDADVISIETSRSHGEFIDTLKHTTYEKGIGLGVYDIHSPRVPSKDEMYKIVEQSLEVCDPKYFWINPDCGLKTRRTEEVIPALEHMVQAAKDARSLLKTNA.

Residues 17–20 and K111 contribute to the 5-methyltetrahydropteroyltri-L-glutamate site; that span reads REWK. Residues 435-437 and E488 contribute to the L-homocysteine site; that span reads IGS. L-methionine is bound by residues 435–437 and E488; that span reads IGS. 5-methyltetrahydropteroyltri-L-glutamate is bound by residues 519–520 and W565; that span reads RC. Residue D603 participates in L-homocysteine binding. Position 603 (D603) interacts with L-methionine. E609 contributes to the 5-methyltetrahydropteroyltri-L-glutamate binding site. Zn(2+) contacts are provided by H645, C647, and E669. The active-site Proton donor is H698. C730 contributes to the Zn(2+) binding site.

This sequence belongs to the vitamin-B12 independent methionine synthase family. The cofactor is Zn(2+).

The catalysed reaction is 5-methyltetrahydropteroyltri-L-glutamate + L-homocysteine = tetrahydropteroyltri-L-glutamate + L-methionine. The protein operates within amino-acid biosynthesis; L-methionine biosynthesis via de novo pathway; L-methionine from L-homocysteine (MetE route): step 1/1. In terms of biological role, catalyzes the transfer of a methyl group from 5-methyltetrahydrofolate to homocysteine resulting in methionine formation. In Bacillus cereus (strain G9842), this protein is 5-methyltetrahydropteroyltriglutamate--homocysteine methyltransferase.